A 469-amino-acid polypeptide reads, in one-letter code: Putative dipeptidase SH1171 (469 aa).

Position 84 (His-84) interacts with Zn(2+). Asp-86 is a catalytic residue. Asp-115 contributes to the Zn(2+) binding site. The Proton acceptor role is filled by Glu-149. Residues Glu-150, Asp-173, and His-440 each contribute to the Zn(2+) site.

It belongs to the peptidase M20A family. Zn(2+) serves as cofactor.

In Staphylococcus haemolyticus (strain JCSC1435), this protein is Putative dipeptidase SH1171.